Reading from the N-terminus, the 840-residue chain is Phosphatidylinositol-3-phosphatase myotubularin-1 (840 aa).

A disordered region spans residues 1–28; that stretch reads MTPPRPPSGRVRSLRDYSSESEKMDGTG. The span at 13–25 shows a compositional bias: basic and acidic residues; sequence SLRDYSSESEKMD. The region spanning 45-112 is the GRAM domain; the sequence is GSFSNLSCLL…ATIEKFNKMV (68 aa). The Myotubularin phosphatase domain occupies 199 to 650; it reads GKSSIRASMD…LAPTLWPQFH (452 aa). Residues 332 to 335, 357 to 358, 443 to 449, and R489 contribute to the substrate site; these read NGAM, NI, and CSDGWDR. The active-site Phosphocysteine intermediate is C443. The segment at 506-535 is disordered; that stretch reads QSSSAGSFPSSPVRQSSGSAASQSSSSSHG. A compositionally biased stretch (low complexity) spans 507 to 535; sequence SSSAGSFPSSPVRQSSGSAASQSSSSSHG. Residues 666–734 are a coiled coil; sequence VQCRAMTVKY…AALTRAVQSL (69 aa). Residues 745 to 771 are disordered; that stretch reads VEDDPRSSLENNPRRRNRHGNNSDVSV.

The protein belongs to the protein-tyrosine phosphatase family. Non-receptor class myotubularin subfamily. In terms of tissue distribution, mostly expressed in siliques and leaves (including hydathodes), and, to a lower extent, in flowers and roots.

It localises to the cytoplasm. It is found in the endosome membrane. The catalysed reaction is a 1,2-diacyl-sn-glycero-3-phospho-(1D-myo-inositol-3-phosphate) + H2O = a 1,2-diacyl-sn-glycero-3-phospho-(1D-myo-inositol) + phosphate. It catalyses the reaction a 1,2-diacyl-sn-glycero-3-phospho-(1D-myo-inositol-3,5-bisphosphate) + H2O = a 1,2-diacyl-sn-glycero-3-phospho-(1D-myo-inositol-5-phosphate) + phosphate. Phosphatase with phosphoinositide 3'-phosphatase activity that can use phosphatidylinositol-3-phosphate (PtdIns3P) and phosphatidylinositol-3,5-diphosphate (PtdIns3,5P(2)) as substrates and produces phosphatidylinositol-5-phosphate (PtdIns5P); participates in pathway(s) that transfer gene regulatory signals to the nucleus. Required for recovery after water deprivation, via the accumulation of PtdIns5P upon dehydration; high PtdIns5P levels mediate ATX1 cytoplasmic localization, thus down-regulating the expression of ATX1-dependent genes. Confers sensitivity to soil-water-deficit stress. In Arabidopsis thaliana (Mouse-ear cress), this protein is Phosphatidylinositol-3-phosphatase myotubularin-1 (MTM1).